We begin with the raw amino-acid sequence, 223 residues long: Endonuclease V (223 aa).

2 residues coordinate Mg(2+): Asp-35 and Asp-103.

The protein belongs to the endonuclease V family. Mg(2+) serves as cofactor.

The protein resides in the cytoplasm. The enzyme catalyses Endonucleolytic cleavage at apurinic or apyrimidinic sites to products with a 5'-phosphate.. Its function is as follows. DNA repair enzyme involved in the repair of deaminated bases. Selectively cleaves double-stranded DNA at the second phosphodiester bond 3' to a deoxyinosine leaving behind the intact lesion on the nicked DNA. The polypeptide is Endonuclease V (Salmonella enteritidis PT4 (strain P125109)).